Consider the following 502-residue polypeptide: MEAAGFLYYSPDPQGRQQKQHGHHGHFLAQPNAAYTISASPQLLAPTPIHFPSQLVLGGRGVPLTITPSASPSLMEPYRDMCSESATTDLLFNPATPPLTHSAVSTPSLSYAMPTPISNHGWSSEEPVIATVSLSDIHLPSTPADYFPPGLVAPSILKSNASPPPSISLNDLHCPALSPCSSQDSFNESDCCDPRELTIQSPTPVEIKPDILFPPMASLSGDDDQFLFGGNVESFLPLASKVTPYMAGDYNEELSDLGDSEDDFIQNFSESVFSNKRMRFDDDSENEQLPSPPMSTSSSRQGSVAPIKVLKRKLLKVKKEDTPEEMSEEQRLRSFKFGSIDSACSSEPSSPCSEKHSHMVGHPISPHVIRRGRKQSLTEDPSKTFVCHLCTRRFRRQEHLKRHFRSLHTEDKPFACGECGKKFSRSDNLTQHSRIHGTGAVVLGVLTEGEVPVLGSQFMEDESMHSPQPFIVVDSMTAASGEIKDKSSDDKKSRKKRKRSDE.

2 C2H2-type zinc fingers span residues 385 to 408 (FVCHLCTRRFRRQEHLKRHFRSLH) and 414 to 436 (FACGECGKKFSRSDNLTQHSRIH).

It is found in the nucleus. In terms of biological role, key downstream transcription factor in the HOG1-MAPK pathway. Plays crucial roles in the regulation of growth, conidiation, trap development and fatty acid metabolism. Negatively regulates secondary metabolism such as arthrobotrisins biosynthesis.Also regulates autophagy and endocytosis. In Arthrobotrys oligospora (strain ATCC 24927 / CBS 115.81 / DSM 1491) (Nematode-trapping fungus), this protein is C2H2-type transcription factor MSN2.